Consider the following 1185-residue polypeptide: Chromosome partition protein Smc (1185 aa).

Proline 32–asparagine 39 lines the ATP pocket. Residues isoleucine 167–serine 494 adopt a coiled-coil conformation. The SMC hinge domain maps to threonine 521–alanine 639. Positions arginine 677–methionine 1031 form a coiled coil.

The protein belongs to the SMC family. Homodimer.

It is found in the cytoplasm. In terms of biological role, required for chromosome condensation and partitioning. In Halothermothrix orenii (strain H 168 / OCM 544 / DSM 9562), this protein is Chromosome partition protein Smc.